We begin with the raw amino-acid sequence, 348 residues long: MAVTFDISPEKEAGVLRLFHSQLFVTPPPLTRRDVDLSGKTAIVTGANGGLGLETAHQLLDLGCKVILAVRRVERGEAARQKLLEGRDAQATEIEVWPLDLSSYESVVGFAERAKTLSRLDIAILNAGLYKVNQTMTASTGYEESIHVNYLANALLITLLAPIFKNKKTGNTPGRIVLVSSDLAAWAKFKERKSNPILPTFKQKMTPKWDYLERYGTSKVLGQFFVTELAKRVSPDAVLVTTTNCGLCHGSELSREGQGHLIGYVFNVVSRLFGRSCSVGARVFVHAAANPVLGASVHGQYVEDAKLKPMSPLIYKPGDLQLGSKLWEETMDELSFAGAREIIDSLTK.

Leu-51, Arg-75, Asp-100, and Asn-126 together coordinate NADP(+). Catalysis depends on proton donor residues Ser-180 and Tyr-215. Positions 215 and 219 each coordinate NADP(+). Lys-219 acts as the Lowers pKa of active site Tyr in catalysis.

Belongs to the short-chain dehydrogenases/reductases (SDR) family.

The protein operates within secondary metabolite biosynthesis. In terms of biological role, short-chain dehydrogenase; part of the gene cluster that mediates the biosynthesis of flavoglaucin and congeners (including aspergin, dihydroauroglaucin and auroglaucin), prenylated salicylaldehyde derivatives carrying a saturated or an unsaturated C-7 side chain. The PKS fogA releases the carboxylic acid (8E,10E,12E)-3,5,7-trihydroxytetradeca-8,10,12-trienoic acid as its product, as well as derivatives with one and two double bonds. FogA is indeed able to reduce the initial triketide, thus being at least partially responsible for the differently saturated heptyl side chains of flavoglaucin congeners. The oxidoreductases fogB, fogC and fogD modify the nascent polyketide in fogA-bound form and, together, fogA, fogB, fogC and fogD are necessary for the formation of the aromatic core and the cyclized PKS products are released as salicyl alcohols. In particular, fogB is responsible for oxidation of a hydroxyl group or reduction of remaining double bond(s) at the C-7 residue whereas fogD is probably involved in the reductive release of the modified PKS products. The cytochrome P450 monooxygenase fogE is then responsible for the hydroxylation at C-3 of the benzene ring. The fogE products are substrates of the prenyltransferase fogH and the prenylated benzyl alcohols are subsequently oxidized by the fogF to produce the final aryl aldehydes flavoglaucin and congeners. The short-chain dehydrogenase fogG does not seem to be involved in the biosynthesis of the prenylated salicylaldehyde derivatives. This is Short-chain dehydrogenase fogG from Aspergillus ruber (strain CBS 135680).